Here is a 198-residue protein sequence, read N- to C-terminus: RNA pyrophosphohydrolase (198 aa).

The region spanning 6–149 (GYRPNVGIVI…KKEVYRKAMK (144 aa)) is the Nudix hydrolase domain. Positions 38-59 (GGINDNESAEQAMYRELFEEVG) match the Nudix box motif.

The protein belongs to the Nudix hydrolase family. RppH subfamily. A divalent metal cation is required as a cofactor.

Accelerates the degradation of transcripts by removing pyrophosphate from the 5'-end of triphosphorylated RNA, leading to a more labile monophosphorylated state that can stimulate subsequent ribonuclease cleavage. In Pasteurella multocida (strain Pm70), this protein is RNA pyrophosphohydrolase.